The following is a 406-amino-acid chain: Putative cyclin-F3-2 (406 aa).

Residues 1–107 (MARPRTRSVA…PGAAGGPWQL (107 aa)) are disordered. 2 stretches are compositionally biased toward low complexity: residues 11–21 (RMEATAAAAAA) and 29–57 (NPDG…NAGE).

This sequence belongs to the cyclin family. Cyclin F subfamily.

The protein is Putative cyclin-F3-2 (CYCF3-2) of Oryza sativa subsp. japonica (Rice).